Here is an 843-residue protein sequence, read N- to C-terminus: MPLSYQHFRKLLLLDDEAGPLEEELPRLADEGLNRRVAEDLNLGNLNVSIPWTHKVGNFTGLYSSTVPVFNPEWQTPSFPNIHLQEDIINRCQQYVGPLTVNEKRRLKLIMPARFYPNLTKYLPLDKGIKPYYPEHAVNHYFKTRHYLHTLWKAGILYKRETTRSASFCGSPYSWEQELQHGRLVFQTSTRHGDESFCSQSSGILSRSPVGPCIRSQLKQSRLGLQPQQGSLARGKSGRSGSIWARVHSTTRRSFGVEPSGSGHIDNSASSASSCLYQSAVRKTAYSHLSTSKRQSSSGHAVELHNIPPSCARSQSEGPISSCWWLQFRNSEPCSDYCLTHIVNLLEDWGPCTEHGEHNIRIPRTPARVTGGVFLVDKNPHNTTESRLVVDFSQFSRGSTHVSWPKFAVPNLQSLTNLLSSNLSWLSLDVSAAFYHIPLHPAAMPHLLVGSSGLPRYVARLSSTSRNINYQHGTMQDLHDSCSRNLYVSLLLLYKTFGRKLHLYSHPIILGFRKIPMGVGLSPFLLAQFTSAICSVVRRAFPHCLAFSYMDDVVLGAKSVQHLESLFTSITNFLLSLGIHLNPHKTKRWGYSLNFMGYVIGSWGTLPQEHIVLKIKQCFRKLPVNRPIDWKVCQRIVGLLGFAAPFTQCGYPALMPLYACIQSKQAFTFSPTYKAFLCKQYLHLYPVARQRSGLCQVFADATPTGWGLAIGQSGMRGTFVAPLPIHTAELLAACFARSRSGAKLIGTDNSVVLSRKYTSFPWLLGCAANWILRGTSFVYVPSALNPADDPSRGRLGLYRPLLHLPFRPTTGRASLYAVSPSVPSHLPVRVHFASPLHVAWRPP.

Residues 1 to 177 form a terminal protein domain (TP) region; that stretch reads MPLSYQHFRK…FCGSPYSWEQ (177 aa). The segment at 178-346 is spacer; that stretch reads ELQHGRLVFQ…YCLTHIVNLL (169 aa). Residues 347–690 form a polymerase/reverse transcriptase domain (RT) region; sequence EDWGPCTEHG…YLHLYPVARQ (344 aa). Residues 357–600 form the Reverse transcriptase domain; it reads EHNIRIPRTP…YSLNFMGYVI (244 aa). Positions 429, 551, and 552 each coordinate Mg(2+).

It belongs to the hepadnaviridae P protein family.

It carries out the reaction DNA(n) + a 2'-deoxyribonucleoside 5'-triphosphate = DNA(n+1) + diphosphate. The catalysed reaction is Endonucleolytic cleavage to 5'-phosphomonoester.. Activated by host HSP70 and HSP40 in vitro to be able to bind the epsilon loop of the pgRNA. Because deletion of the RNase H region renders the protein partly chaperone-independent, the chaperones may be needed indirectly to relieve occlusion of the RNA-binding site by this domain. Inhibited by several reverse-transcriptase inhibitors: Lamivudine, Adefovir and Entecavir. Multifunctional enzyme that converts the viral RNA genome into dsDNA in viral cytoplasmic capsids. This enzyme displays a DNA polymerase activity that can copy either DNA or RNA templates, and a ribonuclease H (RNase H) activity that cleaves the RNA strand of RNA-DNA heteroduplexes in a partially processive 3'- to 5'-endonucleasic mode. Neo-synthesized pregenomic RNA (pgRNA) are encapsidated together with the P protein, and reverse-transcribed inside the nucleocapsid. Initiation of reverse-transcription occurs first by binding the epsilon loop on the pgRNA genome, and is initiated by protein priming, thereby the 5'-end of (-)DNA is covalently linked to P protein. Partial (+)DNA is synthesized from the (-)DNA template and generates the relaxed circular DNA (RC-DNA) genome. After budding and infection, the RC-DNA migrates in the nucleus, and is converted into a plasmid-like covalently closed circular DNA (cccDNA). The activity of P protein does not seem to be necessary for cccDNA generation, and is presumably released from (+)DNA by host nuclear DNA repair machinery. In Hepatitis B virus genotype C subtype adr (isolate Japan/Nishioka/1983) (HBV-C), this protein is Protein P.